The primary structure comprises 185 residues: Thiol:disulfide interchange protein DsbE (185 aa).

At 1–4 (MKRN) the chain is on the cytoplasmic side. The helical transmembrane segment at 5–25 (VLLLPLLIFLLIAAALLWQLA) threads the bilayer. The Periplasmic portion of the chain corresponds to 26–185 (RNAQGDDPTN…WDRYSREAAQ (160 aa)). In terms of domain architecture, Thioredoxin spans 39–177 (ALTGKPVPAF…WESELKPLWD (139 aa)). Cys80 and Cys83 are joined by a disulfide.

The protein belongs to the thioredoxin family. DsbE subfamily.

Its subcellular location is the cell inner membrane. Functionally, involved in disulfide bond formation. Catalyzes a late, reductive step in the assembly of periplasmic c-type cytochromes, probably the reduction of disulfide bonds of the apocytochrome c to allow covalent linkage with the heme. Possible subunit of a heme lyase. The chain is Thiol:disulfide interchange protein DsbE (dsbE1) from Salmonella typhimurium (strain LT2 / SGSC1412 / ATCC 700720).